We begin with the raw amino-acid sequence, 157 residues long: Ribosome maturation factor RimP (157 aa).

It belongs to the RimP family.

Its subcellular location is the cytoplasm. Required for maturation of 30S ribosomal subunits. This is Ribosome maturation factor RimP from Lactococcus lactis subsp. cremoris (strain MG1363).